The following is an 81-amino-acid chain: Insect-toxin Cn10 (81 aa).

An N-terminal signal peptide occupies residues 1–13; it reads ITACLVLIGTVCA. One can recognise an LCN-type CS-alpha/beta domain in the interval 14 to 79; that stretch reads KEGYLVNKST…TYPIPGKTCR (66 aa). Intrachain disulfides connect cysteine 25–cysteine 78, cysteine 29–cysteine 54, cysteine 38–cysteine 59, and cysteine 42–cysteine 61. Position 81 (lysine 81) is a propeptide, removed by a carboxypeptidase.

This sequence belongs to the long (4 C-C) scorpion toxin superfamily. Sodium channel inhibitor family. Beta subfamily. Expressed by the venom gland.

The protein resides in the secreted. Beta toxins bind voltage-independently at site-4 of sodium channels (Nav) and shift the voltage of activation toward more negative potentials thereby affecting sodium channel activation and promoting spontaneous and repetitive firing. Is toxic on insects and crustaceans, but not on mammals. The sequence is that of Insect-toxin Cn10 from Centruroides noxius (Mexican scorpion).